We begin with the raw amino-acid sequence, 176 residues long: Nucleoside triphosphate/diphosphate phosphatase (176 aa).

Catalysis depends on R23, which acts as the Proton donor. N87, D103, D105, D107, D120, and E123 together coordinate Mg(2+).

The protein belongs to the Ntdp family. Mg(2+) is required as a cofactor.

It carries out the reaction a ribonucleoside 5'-triphosphate + H2O = a ribonucleoside 5'-diphosphate + phosphate + H(+). It catalyses the reaction a ribonucleoside 5'-diphosphate + H2O = a ribonucleoside 5'-phosphate + phosphate + H(+). Functionally, has nucleoside phosphatase activity towards nucleoside triphosphates and nucleoside diphosphates. The protein is Nucleoside triphosphate/diphosphate phosphatase of Bacillus cereus (strain G9842).